We begin with the raw amino-acid sequence, 223 residues long: MHFLIPAAGSGSRMKAGKNKLLIDLEGESLIYWTLKSVLSANSTNWVGIIGQPKDKNLLLNSAKDFAQKVHWINGGDTRQQSVFNGLEALPKDAKKVLIHDGARCLINPELIDLCAKQLDENEAVILATKVTDTIKIVDKEGFIKETPDRNYLWAAQTPQGFLVDRLKKAHKMAIDKKWKVTDDASLFEILNWKVKIIEGTYSNIKITSPIDLKIAKLFVKNP.

It belongs to the IspD/TarI cytidylyltransferase family. IspD subfamily.

The enzyme catalyses 2-C-methyl-D-erythritol 4-phosphate + CTP + H(+) = 4-CDP-2-C-methyl-D-erythritol + diphosphate. The protein operates within isoprenoid biosynthesis; isopentenyl diphosphate biosynthesis via DXP pathway; isopentenyl diphosphate from 1-deoxy-D-xylulose 5-phosphate: step 2/6. Its function is as follows. Catalyzes the formation of 4-diphosphocytidyl-2-C-methyl-D-erythritol from CTP and 2-C-methyl-D-erythritol 4-phosphate (MEP). The polypeptide is 2-C-methyl-D-erythritol 4-phosphate cytidylyltransferase (Prochlorococcus marinus (strain AS9601)).